The following is a 523-amino-acid chain: Factor arrest protein 8 (523 aa).

Residues 26–76 are a coiled coil; that stretch reads TKNERDRITWELERSEMKARIAELEGENRDLKHQLNQIQSKAVSPEGEKEE. Residues 61–80 are disordered; that stretch reads NQIQSKAVSPEGEKEEKHVP. Residues 71-80 are compositionally biased toward basic and acidic residues; it reads EGEKEEKHVP. Phosphoserine is present on serine 115. At threonine 132 the chain carries Phosphothreonine. Residues 150-171 form a disordered region; it reads ALLDTKPNPKQGPSESPSPTKV. Positions 160–171 are enriched in polar residues; sequence QGPSESPSPTKV.

As to quaternary structure, component of a complex at least composed of FAR3, FAR7, FAR8, FAR10, FAR11 and VPS64.

It is found in the cytoplasm. The protein localises to the endoplasmic reticulum. Its function is as follows. Participates in the control of the reentry into the cell cycle following pheromone treatment. In Saccharomyces cerevisiae (strain ATCC 204508 / S288c) (Baker's yeast), this protein is Factor arrest protein 8 (FAR8).